Here is an 83-residue protein sequence, read N- to C-terminus: MKASVFAVILGLVVLCACSFAEDEQDQFVSPNELLKSMFVESRHEFTPEVEGRYCQKWMWTCDSKRACCEGLRCKLWCRKIIG.

The N-terminal stretch at 1–21 is a signal peptide; that stretch reads MKASVFAVILGLVVLCACSFA. A propeptide spanning residues 22–53 is cleaved from the precursor; sequence EDEQDQFVSPNELLKSMFVESRHEFTPEVEGR. 3 disulfides stabilise this stretch: cysteine 55-cysteine 69, cysteine 62-cysteine 74, and cysteine 68-cysteine 78. Residue isoleucine 82 is modified to Isoleucine amide.

This sequence belongs to the neurotoxin 30 (phrixotoxin) family. In terms of tissue distribution, expressed by the venom gland.

It is found in the secreted. In terms of biological role, this gating-modifier toxin shows an important inhibitory activity on sodium channels. It is very active on Nav1.7/SCN9A (IC(50)~0.6 nM), and also shows activity on Nav1.3/SCN3A (IC(50)=292 nM), Nav1.4/SCN4A (IC(50)=2.2-159 nM), and Nav1.5/SCN5A (IC(50)=2.3-2.9 uM). It has also been shown to inhibit tetrodotoxin (TTX)-resistant (IC(50)=27.6 nM) and TTX-sensitive (IC(50)=30.2 nM) sodium channels in rat dorsal root ganglion neurons. Lower inhibitory activity has also been shown on potassium channels: Kv4.2/KCND2 (IC(50)=604.2 nM), Kv4.3/KCND3 (IC(50)=425.1 nM), and Kv2.1/KCNB1 (IC(50)=14.3 uM). It binds to phospholipid membranes. Like its analog AM-8145, it may act by interacting only with the second voltage-sensor domain of Nav1.7/SCN9A. This chain is Beta/kappa-theraphotoxin-Cg2a, found in Chilobrachys guangxiensis (Chinese earth tiger tarantula).